The chain runs to 182 residues: Adenylate kinase (182 aa).

12–17 (GAGKGT) is an ATP binding site. Positions 32-61 (STGDLLRTEVGAKTPLGQEAAAVMNRGELV) are NMP. AMP-binding positions include Thr33, Arg38, 59–61 (ELV), 85–88 (GFPR), and Gln92. Residues 126–132 (SRGRSDD) are LID. Residue Arg127 participates in ATP binding. Arg129 and Arg140 together coordinate AMP. ATP is bound at residue Gly168.

It belongs to the adenylate kinase family. Monomer.

The protein resides in the cytoplasm. It catalyses the reaction AMP + ATP = 2 ADP. It functions in the pathway purine metabolism; AMP biosynthesis via salvage pathway; AMP from ADP: step 1/1. Its function is as follows. Catalyzes the reversible transfer of the terminal phosphate group between ATP and AMP. Plays an important role in cellular energy homeostasis and in adenine nucleotide metabolism. The protein is Adenylate kinase of Prochlorococcus marinus (strain MIT 9313).